We begin with the raw amino-acid sequence, 672 residues long: Ubiquitin carboxyl-terminal hydrolase 19 (672 aa).

Residues 11–31 (NSFTQLILTLFFVSIGLLYFV) traverse the membrane as a helical segment. 8 residues coordinate Zn(2+): cysteine 64, cysteine 67, cysteine 75, cysteine 78, cysteine 84, cysteine 88, histidine 97, and cysteine 101. Residues 64–101 (CSVCGKATTKKCSRCKSVRYCSAACQTSDWKSGHKLKC) form an MYND-type zinc finger. The region spanning 174-480 (CGLTNCGNSC…RAYMLLYSRV (307 aa)) is the USP domain. Cysteine 183 functions as the Nucleophile in the catalytic mechanism. Catalysis depends on histidine 439, which acts as the Proton acceptor. The disordered stretch occupies residues 484–672 (PSNLRSEESQ…HSDTEMIDAQ (189 aa)). The span at 488-499 (RSEESQDEKKTD) shows a compositional bias: basic and acidic residues. The segment covering 500–527 (TLNTESNQDGSVESSGVGTNDTSVSSLC) has biased composition (polar residues). 2 stretches are compositionally biased toward basic and acidic residues: residues 533–543 (HSEDPEYEKES) and 553–594 (EEGK…KEDP). Positions 606-615 (LDITTPSPSA) are enriched in polar residues. Basic and acidic residues predominate over residues 623-666 (ENERSDTESKPLEKEHSDTESNKPLEKEHLDSESKPLEKEHSDT).

Belongs to the peptidase C19 family.

Its subcellular location is the membrane. The catalysed reaction is Thiol-dependent hydrolysis of ester, thioester, amide, peptide and isopeptide bonds formed by the C-terminal Gly of ubiquitin (a 76-residue protein attached to proteins as an intracellular targeting signal).. Recognizes and hydrolyzes the peptide bond at the C-terminal Gly of ubiquitin. Involved in the processing of poly-ubiquitin precursors as well as that of ubiquitinated proteins. This is Ubiquitin carboxyl-terminal hydrolase 19 (UBP19) from Arabidopsis thaliana (Mouse-ear cress).